Here is an 886-residue protein sequence, read N- to C-terminus: Valine--tRNA ligase (886 aa).

The short motif at 53-63 (PNVTGSLHMGH) is the 'HIGH' region element. The short motif at 540–544 (KMSKS) is the 'KMSKS' region element. Lysine 543 lines the ATP pocket. A coiled-coil region spans residues 819-851 (TIDVAAERRRLEKELAGAQKELASTAAKLANAD).

Belongs to the class-I aminoacyl-tRNA synthetase family. ValS type 1 subfamily. In terms of assembly, monomer.

The protein resides in the cytoplasm. The catalysed reaction is tRNA(Val) + L-valine + ATP = L-valyl-tRNA(Val) + AMP + diphosphate. Functionally, catalyzes the attachment of valine to tRNA(Val). As ValRS can inadvertently accommodate and process structurally similar amino acids such as threonine, to avoid such errors, it has a 'posttransfer' editing activity that hydrolyzes mischarged Thr-tRNA(Val) in a tRNA-dependent manner. This Mycobacterium tuberculosis (strain CDC 1551 / Oshkosh) protein is Valine--tRNA ligase.